A 284-amino-acid polypeptide reads, in one-letter code: Phosphatidylserine decarboxylase proenzyme (284 aa).

Active-site charge relay system; for autoendoproteolytic cleavage activity residues include D88, H145, and S251. Residue S251 is the Schiff-base intermediate with substrate; via pyruvic acid; for decarboxylase activity of the active site. S251 is subject to Pyruvic acid (Ser); by autocatalysis.

It belongs to the phosphatidylserine decarboxylase family. PSD-B subfamily. Prokaryotic type I sub-subfamily. Heterodimer of a large membrane-associated beta subunit and a small pyruvoyl-containing alpha subunit. It depends on pyruvate as a cofactor. Post-translationally, is synthesized initially as an inactive proenzyme. Formation of the active enzyme involves a self-maturation process in which the active site pyruvoyl group is generated from an internal serine residue via an autocatalytic post-translational modification. Two non-identical subunits are generated from the proenzyme in this reaction, and the pyruvate is formed at the N-terminus of the alpha chain, which is derived from the carboxyl end of the proenzyme. The autoendoproteolytic cleavage occurs by a canonical serine protease mechanism, in which the side chain hydroxyl group of the serine supplies its oxygen atom to form the C-terminus of the beta chain, while the remainder of the serine residue undergoes an oxidative deamination to produce ammonia and the pyruvoyl prosthetic group on the alpha chain. During this reaction, the Ser that is part of the protease active site of the proenzyme becomes the pyruvoyl prosthetic group, which constitutes an essential element of the active site of the mature decarboxylase.

The protein localises to the cell membrane. The enzyme catalyses a 1,2-diacyl-sn-glycero-3-phospho-L-serine + H(+) = a 1,2-diacyl-sn-glycero-3-phosphoethanolamine + CO2. It functions in the pathway phospholipid metabolism; phosphatidylethanolamine biosynthesis; phosphatidylethanolamine from CDP-diacylglycerol: step 2/2. Functionally, catalyzes the formation of phosphatidylethanolamine (PtdEtn) from phosphatidylserine (PtdSer). In Polaromonas sp. (strain JS666 / ATCC BAA-500), this protein is Phosphatidylserine decarboxylase proenzyme.